The following is a 155-amino-acid chain: Small ribosomal subunit protein uS7c (155 aa).

It belongs to the universal ribosomal protein uS7 family. As to quaternary structure, part of the 30S ribosomal subunit.

Its subcellular location is the plastid. The protein localises to the chloroplast. One of the primary rRNA binding proteins, it binds directly to 16S rRNA where it nucleates assembly of the head domain of the 30S subunit. This is Small ribosomal subunit protein uS7c (rps7) from Pinus thunbergii (Japanese black pine).